The following is a 440-amino-acid chain: Transposon Ty1-BL Gag polyprotein (440 aa).

Polar residues-rich tracts occupy residues 20-31 (SVTSKEVQTTQD), 46-55 (VSTQANSQQP), and 137-168 (VGTH…TNQH). 3 disordered regions span residues 20-84 (SVTS…QNGP), 137-173 (VGTH…RPPP), and 350-424 (QQES…TTEP). The tract at residues 299–401 (NNGIPINNKV…NSQSRTARAH (103 aa)) is RNA-binding. The segment covering 363–372 (SPSDEKKDSR) has biased composition (basic and acidic residues). Over residues 373–411 (TYTNTTKPKSITRNSQKPNNSQSRTARAHNVSTFNNSPG) the composition is skewed to polar residues.

As to quaternary structure, homotrimer.

It is found in the cytoplasm. Functionally, capsid protein (CA) is the structural component of the virus-like particle (VLP), forming the shell that encapsulates the retrotransposons dimeric RNA genome. The particles are assembled from trimer-clustered units and there are holes in the capsid shells that allow for the diffusion of macromolecules. CA also has nucleocapsid-like chaperone activity, promoting primer tRNA(i)-Met annealing to the multipartite primer-binding site (PBS), dimerization of Ty1 RNA and initiation of reverse transcription. The polypeptide is Transposon Ty1-BL Gag polyprotein (TY1A-BL) (Saccharomyces cerevisiae (strain ATCC 204508 / S288c) (Baker's yeast)).